Here is a 109-residue protein sequence, read N- to C-terminus: C-X-C motif chemokine 13 (109 aa).

The signal sequence occupies residues 1–21 (MRLSTATLLLLLASCLSPGHG). Intrachain disulfides connect Cys-32-Cys-59 and Cys-34-Cys-75.

This sequence belongs to the intercrine alpha (chemokine CxC) family. Found in spleen (B-cell-rich zone or follicles), Peyer patches (strongest within germinal centers and extending to the mantle zone) and lymph nodes (in reticular pattern in follicles).

It is found in the secreted. In terms of biological role, strongly chemotactic for B-lymphocytes, weakly for spleen monocytes and macrophages but no chemotactic activity for granulocytes. Binds to BLR1/CXCR5. May play a role in directing the migration of B-lymphocytes to follicles in secondary lymphoid organs. This is C-X-C motif chemokine 13 (Cxcl13) from Mus musculus (Mouse).